We begin with the raw amino-acid sequence, 159 residues long: Transcriptional repressor NrdR (159 aa).

Polar residues predominate over residues 1–11 (MQCPSCQNTDS). The interval 1-20 (MQCPSCQNTDSRVLESRSAD) is disordered. A zinc finger lies at 3–34 (CPSCQNTDSRVLESRSADSGRSVRRRRECLNC). One can recognise an ATP-cone domain in the interval 49 to 139 (INVLKRSGAK…VYRQFNGIND (91 aa)).

Belongs to the NrdR family. Requires Zn(2+) as cofactor.

In terms of biological role, negatively regulates transcription of bacterial ribonucleotide reductase nrd genes and operons by binding to NrdR-boxes. This Prochlorococcus marinus (strain NATL1A) protein is Transcriptional repressor NrdR.